The primary structure comprises 431 residues: Enolase (431 aa).

Glutamine 166 serves as a coordination point for (2R)-2-phosphoglycerate. Glutamate 208 functions as the Proton donor in the catalytic mechanism. Residues aspartate 245, glutamate 288, and aspartate 315 each contribute to the Mg(2+) site. The (2R)-2-phosphoglycerate site is built by lysine 340, arginine 369, serine 370, and lysine 391. Lysine 340 serves as the catalytic Proton acceptor.

This sequence belongs to the enolase family. The cofactor is Mg(2+).

It is found in the cytoplasm. The protein resides in the secreted. It localises to the cell surface. The enzyme catalyses (2R)-2-phosphoglycerate = phosphoenolpyruvate + H2O. It functions in the pathway carbohydrate degradation; glycolysis; pyruvate from D-glyceraldehyde 3-phosphate: step 4/5. Catalyzes the reversible conversion of 2-phosphoglycerate (2-PG) into phosphoenolpyruvate (PEP). It is essential for the degradation of carbohydrates via glycolysis. The polypeptide is Enolase (Clostridium botulinum (strain Loch Maree / Type A3)).